We begin with the raw amino-acid sequence, 405 residues long: Histidine decarboxylase (405 aa).

His-121 contributes to the substrate binding site. Position 234 is an N6-(pyridoxal phosphate)lysine (Lys-234).

This sequence belongs to the group II decarboxylase family. Homotetramer. Requires pyridoxal 5'-phosphate as cofactor.

It carries out the reaction L-histidine + H(+) = histamine + CO2. It participates in siderophore biosynthesis; pseudomonine biosynthesis. The protein is Histidine decarboxylase of Pseudomonas fluorescens.